Consider the following 248-residue polypeptide: Deoxyribose-phosphate aldolase (248 aa).

Asp-117 serves as the catalytic Proton donor/acceptor. Lys-179 serves as the catalytic Schiff-base intermediate with acetaldehyde. The Proton donor/acceptor role is filled by Lys-208.

This sequence belongs to the DeoC/FbaB aldolase family. DeoC type 1 subfamily.

Its subcellular location is the cytoplasm. It catalyses the reaction 2-deoxy-D-ribose 5-phosphate = D-glyceraldehyde 3-phosphate + acetaldehyde. It participates in carbohydrate degradation; 2-deoxy-D-ribose 1-phosphate degradation; D-glyceraldehyde 3-phosphate and acetaldehyde from 2-deoxy-alpha-D-ribose 1-phosphate: step 2/2. Catalyzes a reversible aldol reaction between acetaldehyde and D-glyceraldehyde 3-phosphate to generate 2-deoxy-D-ribose 5-phosphate. This chain is Deoxyribose-phosphate aldolase, found in Thermotoga petrophila (strain ATCC BAA-488 / DSM 13995 / JCM 10881 / RKU-1).